A 2169-amino-acid polypeptide reads, in one-letter code: Voltage-dependent L-type calcium channel subunit alpha-1C (2169 aa).

Residues 1–154 (MIRAFAQPST…RACISIVEWK (154 aa)) lie on the Cytoplasmic side of the membrane. The segment at 77 to 98 (GAALSWLAAIDAARQAKLMGSA) is calmodulin-binding. A disordered region spans residues 104 to 128 (STVSSTQRKRQQYGKPKKQGGTTAT). Residues 110–121 (QRKRQQYGKPKK) show a composition bias toward basic residues. Residues 141-438 (NPIRRACISI…LVLGVLSGEF (298 aa)) form an I repeat. The chain crosses the membrane as a helical span at residues 155 to 173 (PFEIIILLTIFANCVALAI). The Extracellular portion of the chain corresponds to 174 to 188 (YIPFPEDDSNATNSN). An N-linked (GlcNAc...) asparagine glycan is attached at Asn183. The chain crosses the membrane as a helical span at residues 189-209 (LERVEYLFLIIFTVEAFLKVI). Topologically, residues 210–218 (AYGLLFHPN) are cytoplasmic. A helical transmembrane segment spans residues 219–239 (AYLRNGWNLLDFIIVVVGLFS). At 240 to 262 (AILEQATKADGANALGGKGAGFD) the chain is on the extracellular side. A helical transmembrane segment spans residues 263 to 281 (VKALRAFRVLRPLRLVSGV). Over 282-298 (PSLQVVLNSIIKAMVPL) the chain is Cytoplasmic. A helical membrane pass occupies residues 299–320 (LHIALLVLFVIIIYAIIGLELF). The Extracellular portion of the chain corresponds to 321-380 (MGKMHKTCYNQEGIIDVPAEEDPSPCALETGHGRQCQNGTVCKPGWDGPKHGITNFDNFA). Cystine bridges form between Cys328/Cys356 and Cys346/Cys362. N-linked (GlcNAc...) asparagine glycosylation occurs at Asn358. An intramembrane region (pore-forming) is located at residues 381-402 (FAMLTVFQCITMEGWTDVLYWM). Positions 391–394 (TMEG) match the Selectivity filter of repeat I motif. Glu393 is a Ca(2+) binding site. Topologically, residues 403-410 (QDAMGYEL) are extracellular. A helical membrane pass occupies residues 411 to 431 (PWVYFVSLVIFGSFFVLNLVL). At 432–554 (GVLSGEFSKE…RKCRAAVKSN (123 aa)) the chain is on the cytoplasmic side. Residues 458 to 475 (QQLEEDLKGYLDWITQAE) are AID/alpha-interaction domain; mediates interaction with the beta subunit. Residues 479 to 511 (PENEDEGMDEDKPRNMSMPTSETESVNTENVAG) form a disordered region. Residues 495 to 508 (SMPTSETESVNTEN) show a composition bias toward polar residues. At Ser499 the chain carries Phosphoserine. Thr506 bears the Phosphothreonine mark. One copy of the II repeat lies at 540 to 786 (NRFCRRKCRA…LFLAIAVDNL (247 aa)). The helical transmembrane segment at 555-573 (VFYWLVIFLVFLNTLTIAS) threads the bilayer. Topologically, residues 574-584 (EHYNQPHWLTE) are extracellular. A helical transmembrane segment spans residues 585-605 (VQDTANKALLALFTAEMLLKM). The Cytoplasmic portion of the chain corresponds to 606–616 (YSLGLQAYFVS). The chain crosses the membrane as a helical span at residues 617–636 (LFNRFDCFIVCGGILETILV). Residues 637–645 (ETKIMSPLG) are Extracellular-facing. A helical transmembrane segment spans residues 646–664 (ISCWRCVRLLRIFKITRYW). Residues 665-683 (NSLSNLVASLLNSLRSIAS) are Cytoplasmic-facing. Residues 684–703 (LLLLLFLFIIIFSLLGMQLF) traverse the membrane as a helical segment. Residues 704 to 723 (GGKFNFDEMQTRRSTFDNFP) lie on the Extracellular side of the membrane. Positions 724-745 (QSLLTVFQILTGEDWNSVMYDG) form an intramembrane region, pore-forming. Positions 734–737 (TGED) match the Selectivity filter of repeat II motif. Glu736 lines the Ca(2+) pocket. Residues 746 to 755 (IMAYGGPSFP) lie on the Extracellular side of the membrane. The chain crosses the membrane as a helical span at residues 756-775 (GMLVCIYFIILFISPNYILL). Residues 776 to 930 (NLFLAIAVDN…LQCHRIVNDT (155 aa)) are Cytoplasmic-facing. The tract at residues 794-891 (SAQKEEEEEK…EMPVGPRPRP (98 aa)) is disordered. Residues 813-836 (SPEKKQEVMEKPAVEESKEEKIEL) are compositionally biased toward basic and acidic residues. A phosphoserine mark is found at Ser838 and Ser845. Residues 859–906 (SENEDKSPHSNPDTAGEEDEEEPEMPVGPRPRPLSELHLKEKAVPMPE) form an interaction with STAC2 region. The segment covering 873–882 (AGEEDEEEPE) has biased composition (acidic residues). The stretch at 917 to 1198 (NRFRLQCHRI…IFVGFVIVTF (282 aa)) is one III repeat. The helical transmembrane segment at 931-949 (IFTNLILFFILLSSISLAA) threads the bilayer. The Extracellular portion of the chain corresponds to 950-961 (EDPVQHTSFRNH). The chain crosses the membrane as a helical span at residues 962 to 981 (ILFYFDIVFTTIFTIEIALK). The Cytoplasmic segment spans residues 982–997 (MTAYGAFLHKGSFCRN). A helical membrane pass occupies residues 998–1016 (YFNILDLLVVSVSLISFGI). At 1017 to 1023 (QSSAINV) the chain is on the extracellular side. The helical transmembrane segment at 1024–1041 (VKILRVLRVLRPLRINRA) threads the bilayer. Residues 1042–1060 (KGLKHVVQCVFVAIRTIGN) lie on the Cytoplasmic side of the membrane. Residues 1061–1080 (IVIVTTLLQFMFACIGVQLF) form a helical membrane-spanning segment. Residues 1081–1130 (KGKLYTCSDSSKQTEAESKGNYITYKTGEVDHPIIQPRSWENSKFDFDNV) are Extracellular-facing. Residues 1118 to 1207 (RSWENSKFDF…FQEQGEQEYK (90 aa)) are dihydropyridine binding. Positions 1131-1151 (LAAMMALFTVSTFEGWPELLY) form an intramembrane region, pore-forming. Residues 1142–1145 (TFEG) carry the Selectivity filter of repeat III motif. Ca(2+) is bound at residue Glu1144. Residues 1152–1168 (RSIDSHTEDKGPIYNYR) are Extracellular-facing. The helical transmembrane segment at 1169–1190 (VEISIFFIIYIIIIAFFMMNIF) threads the bilayer. At 1191–1248 (VGFVIVTFQEQGEQEYKNCELDKNQRQCVEYALKARPLPRYIPKNQHQYKVWYVVNST) the chain is on the cytoplasmic side. An IV repeat occupies 1235-1508 (NQHQYKVWYV…LFVAVIMDNF (274 aa)). The helical transmembrane segment at 1249–1270 (YFEYLMFVLILLNTICLAMQHY) threads the bilayer. The Extracellular portion of the chain corresponds to 1271-1278 (GQSCLFKI). A helical transmembrane segment spans residues 1279–1300 (AMNILNMLFTGLFTVEMILKLI). Residues 1301-1310 (AFKPKHYFCD) are Cytoplasmic-facing. The helical transmembrane segment at 1311–1330 (AWNTFDALIVVGSIVDIAIT) threads the bilayer. The Extracellular portion of the chain corresponds to 1331–1353 (EVHPAEHTQCSPSMSAEENSRIS). Residues 1354–1372 (ITFFRLFRVMRLVKLLSRG) form a helical membrane-spanning segment. The Cytoplasmic segment spans residues 1373 to 1390 (EGIRTLLWTFIKSFQALP). Residues 1391–1411 (YVALLIVMLFFIYAVIGMQVF) traverse the membrane as a helical segment. The Extracellular segment spans residues 1412–1433 (GKIALNDTTEINRNNNFQTFPQ). Asn1417 carries N-linked (GlcNAc...) asparagine glycosylation. Residues 1434-1452 (AVLLLFRCATGEAWQDIML) constitute an intramembrane region (pore-forming). The short motif at 1443 to 1446 (TGEA) is the Selectivity filter of repeat IV element. The Extracellular segment spans residues 1453–1480 (ACMPGKKCAPESEPSNSTEGETPCGSSF). Residues 1459-1527 (KCAPESEPSN…LGPHHLDEFK (69 aa)) are dihydropyridine binding. A disulfide bridge links Cys1460 with Cys1476. N-linked (GlcNAc...) asparagine glycosylation occurs at Asn1468. Positions 1473 to 1515 (ETPCGSSFAVFYFISFYMLCAFLIINLFVAVIMDNFDYLTRDW) are phenylalkylamine binding. Residues 1481-1505 (AVFYFISFYMLCAFLIINLFVAVIM) form a helical membrane-spanning segment. The Cytoplasmic segment spans residues 1506–2169 (DNFDYLTRDW…PDSRSYVSNL (664 aa)). Residues 1640–1667 (DEVTVGKFYATFLIQEYFRKFKKRKEQG) form an important for interaction with STAC1, STAC2 and STAC3 region. A calmodulin-binding region spans residues 1640–1673 (DEVTVGKFYATFLIQEYFRKFKKRKEQGLVGKPS). A calmodulin-binding IQ region region spans residues 1646-1666 (KFYATFLIQEYFRKFKKRKEQ). The segment at 1680–1699 (LQAGLRTLHDIGPEIRRAIS) is important for localization in at the junctional membrane. Phosphoserine is present on residues Ser1699 and Ser1720. 2 stretches are compositionally biased toward polar residues: residues 1761-1770 (KTGNNQADTE) and 1780-1792 (STFT…STGS). The interval 1761–1793 (KTGNNQADTESPSHEKLVDSTFTPSSYSSTGSN) is disordered. Ser1927 is subject to Phosphoserine; by PKA. The interval 1970–1998 (RSHSPSTFPRPRPTPPVTPGSRGRPLQPI) is disordered. Residues 1977–1987 (FPRPRPTPPVT) are compositionally biased toward pro residues.

Belongs to the calcium channel alpha-1 subunit (TC 1.A.1.11) family. CACNA1C subfamily. Component of a calcium channel complex consisting of a pore-forming alpha subunit (CACNA1C) and ancillary beta, gamma and delta subunits. The channel complex contains alpha, beta, gamma and delta subunits in a 1:1:1:1 ratio, i.e. it contains only one of each type of subunit. CACNA1C channel activity is modulated by ancillary subunits, such as CACNB1, CACNB2, CACNB3, CACNA2D1 and CACNA2D4. Interacts with the gamma subunits CACNG4, CACNG6, CACNG7 and CACNG8. Interacts with CACNB1. Interacts with CACNB2. Identified in a complex with CACNA2D4 and CACNB3. Interacts with CACNB3. Interacts with CACNA2D1. Interacts with CACNA2D4. Interacts with CALM1. Interacts (via the N-terminus and the C-terminal C and IQ motifs) with CABP1; this inhibits Ca(2+)-dependent channel inactivation. The binding via the C motif is calcium independent whereas the binding via IQ requires the presence of calcium and is mutually exclusive with calmodulin binding. The binding to the cytoplasmic N-terminal domain is calcium independent but is essential for the channel modulation. Interacts (via C-terminal CDB motif) with CABP5; in a calcium-dependent manner. Interacts with CIB1; the interaction increases upon cardiomyocytes hypertrophy. Interacts with STAC2 and STAC3; this inhibits channel inactivation. Phosphorylation by PKA at Ser-1927 activates the channel. Elevated levels of blood glucose lead to increased phosphorylation by PKA. Is also phosphorylated in vitro by CaM-kinase II, PKC and CGPK. As to expression, detected in hippocampus and brain cortex, on neuronal cell bodies and dendrites, and in post-synaptic density in brain (at protein level). Isoforms 4 and 5 are expressed throughout the central nervous system, with highest levels in the olfactory bulb and cerebellum. Also expressed in heart, pituitary, adrenal gland, liver, kidney, and in a much lesser extent in testes and spleen.

It localises to the cell membrane. Its subcellular location is the sarcolemma. It is found in the perikaryon. The protein resides in the postsynaptic density membrane. The protein localises to the cell projection. It localises to the dendrite. Its subcellular location is the T-tubule. The catalysed reaction is Ca(2+)(in) = Ca(2+)(out). Inhibited by dihydropyridines (DHP), such as isradipine. Inhibited by nifedipine. Channel activity is regulated by Ca(2+) and calmodulin. Binding of STAC1, STAC2 or STAC3 to a region that overlaps with the calmodulin binding site inhibits channel inactivation by Ca(2+) and calmodulin. Binding of calmodulin or CABP1 at the same regulatory sites results in opposite effects on the channel function. Shear stress and pressure increases calcium channel activity. Functionally, pore-forming, alpha-1C subunit of the voltage-gated calcium channel that gives rise to L-type calcium currents. Mediates influx of calcium ions into the cytoplasm, and thereby triggers calcium release from the sarcoplasm. Plays an important role in excitation-contraction coupling in the heart. Required for normal heart development and normal regulation of heart rhythm. Required for normal contraction of smooth muscle cells in blood vessels and in the intestine. Essential for normal blood pressure regulation via its role in the contraction of arterial smooth muscle cells. Long-lasting (L-type) calcium channels belong to the 'high-voltage activated' (HVA) group. In Rattus norvegicus (Rat), this protein is Voltage-dependent L-type calcium channel subunit alpha-1C (Cacna1c).